The sequence spans 317 residues: Proline iminopeptidase (317 aa).

The AB hydrolase-1 domain maps to 41 to 296 (VFIHGGPGGG…ELHIVEGAGH (256 aa)). Ser-113 functions as the Nucleophile in the catalytic mechanism. Asp-268 is an active-site residue. The Proton donor role is filled by His-296.

Belongs to the peptidase S33 family. In terms of assembly, monomer.

The protein resides in the cytoplasm. The enzyme catalyses Release of N-terminal proline from a peptide.. Its function is as follows. Specifically catalyzes the removal of N-terminal proline residues from peptides. This is Proline iminopeptidase (pip) from Serratia marcescens.